Consider the following 404-residue polypeptide: Probable protein phosphatase 1N (404 aa).

The PPM-type phosphatase domain maps to Arg-59–Phe-319. Asp-96, Gly-97, Asp-267, and Asp-310 together coordinate Mn(2+).

It belongs to the PP2C family. Requires Mg(2+) as cofactor. The cofactor is Mn(2+).

The catalysed reaction is O-phospho-L-seryl-[protein] + H2O = L-seryl-[protein] + phosphate. The enzyme catalyses O-phospho-L-threonyl-[protein] + H2O = L-threonyl-[protein] + phosphate. In Mus musculus (Mouse), this protein is Probable protein phosphatase 1N (Ppm1n).